Reading from the N-terminus, the 290-residue chain is MTLLADRAPAKVNLTLHVLGRRVGDGYHVLESLVAFAGTADRLTLDPDAPLGLTVSGPTAGPAGPTDDNLVLRAARGLAARVPGLRAGAFHLVKRLPVAAGIGGGSSDAAAALRLLARLNGLPLDHAAVGAVARETGADVPVCLDPRARMMRGAGEEIGAALGLEPLPAVLINPGVPVPTAPVFRALGLSVGQDLAGAPHPTIPQATATDTLLQALAGARNDLEAPALTVAPVIGDALAALRAQGCRLARMSGSGATVFALFADRRAAVRAAAALRAAHPGWWVAPTFLR.

The active site involves K11. 97 to 107 contributes to the ATP binding site; it reads PVAAGIGGGSS. D139 is an active-site residue.

Belongs to the GHMP kinase family. IspE subfamily.

The catalysed reaction is 4-CDP-2-C-methyl-D-erythritol + ATP = 4-CDP-2-C-methyl-D-erythritol 2-phosphate + ADP + H(+). It participates in isoprenoid biosynthesis; isopentenyl diphosphate biosynthesis via DXP pathway; isopentenyl diphosphate from 1-deoxy-D-xylulose 5-phosphate: step 3/6. Catalyzes the phosphorylation of the position 2 hydroxy group of 4-diphosphocytidyl-2C-methyl-D-erythritol. The protein is 4-diphosphocytidyl-2-C-methyl-D-erythritol kinase of Methylobacterium radiotolerans (strain ATCC 27329 / DSM 1819 / JCM 2831 / NBRC 15690 / NCIMB 10815 / 0-1).